Here is a 311-residue protein sequence, read N- to C-terminus: tRNA dimethylallyltransferase (311 aa).

10-17 (GPTAVGKT) is an ATP binding site. 12 to 17 (TAVGKT) lines the substrate pocket. Residues 35-38 (DSMQ) are interaction with substrate tRNA.

The protein belongs to the IPP transferase family. In terms of assembly, monomer. It depends on Mg(2+) as a cofactor.

It carries out the reaction adenosine(37) in tRNA + dimethylallyl diphosphate = N(6)-dimethylallyladenosine(37) in tRNA + diphosphate. In terms of biological role, catalyzes the transfer of a dimethylallyl group onto the adenine at position 37 in tRNAs that read codons beginning with uridine, leading to the formation of N6-(dimethylallyl)adenosine (i(6)A). In Anoxybacillus flavithermus (strain DSM 21510 / WK1), this protein is tRNA dimethylallyltransferase.